A 459-amino-acid chain; its full sequence is tRNA modification GTPase MnmE (459 aa).

(6S)-5-formyl-5,6,7,8-tetrahydrofolate contacts are provided by Arg-22, Glu-85, and Arg-124. The TrmE-type G domain maps to 221–380; sequence GLSTVIVGRP…LEIQIKDLFF (160 aa). Asn-231 serves as a coordination point for K(+). GTP is bound by residues 231–236, 250–256, and 275–278; these read NVGKSS, TEVAGTT, and DTAG. Ser-235 contributes to the Mg(2+) binding site. The K(+) site is built by Thr-250, Val-252, and Thr-255. Residue Thr-256 coordinates Mg(2+). Lys-459 provides a ligand contact to (6S)-5-formyl-5,6,7,8-tetrahydrofolate.

Belongs to the TRAFAC class TrmE-Era-EngA-EngB-Septin-like GTPase superfamily. TrmE GTPase family. As to quaternary structure, homodimer. Heterotetramer of two MnmE and two MnmG subunits. K(+) serves as cofactor.

It localises to the cytoplasm. Its function is as follows. Exhibits a very high intrinsic GTPase hydrolysis rate. Involved in the addition of a carboxymethylaminomethyl (cmnm) group at the wobble position (U34) of certain tRNAs, forming tRNA-cmnm(5)s(2)U34. This is tRNA modification GTPase MnmE from Staphylococcus epidermidis (strain ATCC 35984 / DSM 28319 / BCRC 17069 / CCUG 31568 / BM 3577 / RP62A).